The primary structure comprises 1203 residues: ATP-dependent helicase/nuclease subunit A (1203 aa).

The 469-residue stretch at 4-472 folds into the UvrD-like helicase ATP-binding domain; that stretch reads VKLTPEQNEA…IRLKENFRSR (469 aa). 25–32 serves as a coordination point for ATP; sequence ASAGSGKT. Residues 503–785 form the UvrD-like helicase C-terminal domain; it reads VQGNITDYPV…RVMTFHKSKG (283 aa).

Belongs to the helicase family. AddA subfamily. Heterodimer of AddA and AddB/RexB. The cofactor is Mg(2+).

The catalysed reaction is Couples ATP hydrolysis with the unwinding of duplex DNA by translocating in the 3'-5' direction.. It catalyses the reaction ATP + H2O = ADP + phosphate + H(+). Its function is as follows. The heterodimer acts as both an ATP-dependent DNA helicase and an ATP-dependent, dual-direction single-stranded exonuclease. Recognizes the chi site generating a DNA molecule suitable for the initiation of homologous recombination. The AddA nuclease domain is required for chi fragment generation; this subunit has the helicase and 3' -&gt; 5' nuclease activities. The polypeptide is ATP-dependent helicase/nuclease subunit A (Lactococcus lactis subsp. lactis (strain IL1403) (Streptococcus lactis)).